A 332-amino-acid chain; its full sequence is tRNA (cytosine(38)-C(5))-methyltransferase (332 aa).

The 330-residue stretch at 3–332 (HKILELYSGI…ISELLKILFE (330 aa)) folds into the SAM-dependent MTase C5-type domain. Residues 12-14 (IGG), 33-34 (DI), 55-56 (NI), and S75 contribute to the S-adenosyl-L-homocysteine site. C78 is a catalytic residue. S-adenosyl-L-homocysteine contacts are provided by residues Q79, S97, and 316–317 (NS).

This sequence belongs to the class I-like SAM-binding methyltransferase superfamily. C5-methyltransferase family.

It is found in the cytoplasm. The protein localises to the nucleus. It carries out the reaction cytidine(38) in tRNA + S-adenosyl-L-methionine = 5-methylcytidine(38) in tRNA + S-adenosyl-L-homocysteine + H(+). The catalysed reaction is a 2'-deoxycytidine in DNA + S-adenosyl-L-methionine = a 5-methyl-2'-deoxycytidine in DNA + S-adenosyl-L-homocysteine + H(+). Specifically methylates cytosine 38 in the anticodon loop of tRNA(Asp). Also has DNA (cytosine-5)-methyltransferase activity. Shows affinity for both tRNA(Asp) and DNA substrates. This chain is tRNA (cytosine(38)-C(5))-methyltransferase, found in Spodoptera frugiperda (Fall armyworm).